The sequence spans 248 residues: Tyrosine recombinase XerD-like (248 aa).

The 72-residue stretch at 1-72 (MKSYIEPFIA…TANQFLYYLY (72 aa)) folds into the Core-binding (CB) domain. A Tyr recombinase domain is found at 85–248 (DTMKVMRTEK…PVTLEKYYKS (164 aa)). Residues K149 and R213 contribute to the active site. Catalysis depends on Y245, which acts as the O-(3'-phospho-DNA)-tyrosine intermediate.

Belongs to the 'phage' integrase family. XerD-like subfamily.

Its subcellular location is the cytoplasm. Its function is as follows. Putative tyrosine recombinase. Not involved in the cutting and rejoining of the recombining DNA molecules on dif(SL) site. The protein is Tyrosine recombinase XerD-like of Streptococcus pyogenes serotype M6 (strain ATCC BAA-946 / MGAS10394).